We begin with the raw amino-acid sequence, 259 residues long: Ribonuclease T2-B (259 aa).

Positions 1–29 (MAPAEARGALPGWISVLGWGLALCSLCGA) are cleaved as a signal peptide. The cysteines at positions 53 and 59 are disulfide-linked. H69 is an active-site residue. Disulfide bonds link C79–C125, C188–C244, and C206–C217. N-linked (GlcNAc...) asparagine glycosylation is found at N80 and N110. Catalysis depends on residues E118 and H122. N216 carries N-linked (GlcNAc...) asparagine glycosylation.

This sequence belongs to the RNase T2 family.

The protein localises to the secreted. The protein resides in the lysosome lumen. It is found in the endoplasmic reticulum lumen. Its subcellular location is the mitochondrion intermembrane space. The catalysed reaction is a ribonucleotidyl-ribonucleotide-RNA + H2O = a 3'-end 3'-phospho-ribonucleotide-RNA + a 5'-end dephospho-ribonucleoside-RNA + H(+). It catalyses the reaction an adenylyl-uridine-RNA = a 3'-end 2',3'-cyclophospho-AMP-RNA + a 5'-end dephospho-uridine-RNA. It carries out the reaction a guanylyl-uridine-RNA = a 3'-end 2',3'-cyclophospho-GMP-RNA + a 5'-end dephospho-uridine-RNA. With respect to regulation, inhibited by Zn(2+) and Cu(2+). In terms of biological role, ribonuclease that plays an essential role in innate immune response by recognizing and degrading RNAs from microbial pathogens that are subsequently sensed by TLR8. Cleaves preferentially single-stranded RNA molecules between purine and uridine residues, which critically contributes to the supply of catabolic uridine and the generation of purine-2',3'-cyclophosphate-terminated oligoribonucleotides. In turn, RNase T2 degradation products promote the RNA-dependent activation of TLR8. In plasmacytoid dendritic cells, it cooperates with PLD3 or PLD4 5'-&gt;3' exonucleases to process RNA fragments and release 2',3'-cyclic guanosine monophosphate (2',3'-cGMP), a potent stimulatory ligand for TLR7. Also plays a key role in degradation of mitochondrial RNA and processing of non-coding RNA imported from the cytosol into mitochondria. Participates as well in degradation of mitochondrion-associated cytosolic rRNAs. The sequence is that of Ribonuclease T2-B from Mus musculus (Mouse).